The sequence spans 388 residues: MLTMLTDRIDSQLVLSRLPRSRFQRFWETPTLIMKEESASSSGSIILAEKSVNMRYCVRFASDSDFQTTFTLPQSTEEKYDKEQHPGEDEASSPLPSPLKVPYKWMPSSFIVKQCHTQLAFYNKHIIWLSRERKVPTSLGVSLYIPEGFFGITFYKCLDAQFVCMPELLESRLQVPQLDVVNLNDTFQSIFPGTIEGDIGVFPCFVPEPWQLMNLPPPNEHRFFSLRTRQTLVIGPGHTQTVYFDAAYVHAPGICALIVGVRQFSQSDLIIRPTIWLPGTAAGVTVVNTSHTTVCISPHTTVAKAVFTTHRFTYLPVGSHPLGQMIVPPTPDIGFTHTPEHALLQRTPSPVDDDVDETEEDEKSSDAESPVNTNDVIFDVGPKPPRHP.

A compositionally biased stretch (basic and acidic residues) spans 77 to 88 (EEKYDKEQHPGE). Disordered regions lie at residues 77–96 (EEKYDKEQHPGEDEASSPLP) and 336–388 (THTP…PRHP). Residues 351–363 (VDDDVDETEEDEK) show a composition bias toward acidic residues.

The protein belongs to the dUTPase family. Requires Mg(2+) as cofactor.

It is found in the virion. The enzyme catalyses dUTP + H2O = dUMP + diphosphate + H(+). Its pathway is pyrimidine metabolism; dUMP biosynthesis; dUMP from dCTP (dUTP route): step 2/2. Involved in nucleotide metabolism: produces dUMP, the immediate precursor of thymidine nucleotides and decreases the intracellular concentration of dUTP to avoid uracil incorporation into viral DNA. The chain is Deoxyuridine 5'-triphosphate nucleotidohydrolase from Human cytomegalovirus (strain AD169) (HHV-5).